The following is a 248-amino-acid chain: uncharacterized protein (248 aa).

Ile-9 to Val-33 contacts NADP(+). Substrate is bound at residue Ser-141. The Proton acceptor role is filled by Tyr-154.

It belongs to the short-chain dehydrogenases/reductases (SDR) family.

This is an uncharacterized protein from Listeria innocua serovar 6a (strain ATCC BAA-680 / CLIP 11262).